The following is a 178-amino-acid chain: Endothelin-2 (178 aa).

Residues 1–24 (MVSVPTAWCSVALALLVALHEGKD) form the signal peptide. A propeptide spanning residues 25 to 46 (QAAATLEQPASSPRARAAHLRL) is cleaved from the precursor. Cystine bridges form between Cys-49–Cys-63 and Cys-51–Cys-59. Residues 70-178 (VNTPGQTAPY…RTTHSRHRKR (109 aa)) constitute a propeptide that is removed on maturation. The endothelin-like stretch occupies residues 96 to 111 (CECSSARDPACATFCH). Positions 154-178 (KTHFAKRQQEATREPRTTHSRHRKR) are disordered. Over residues 160–170 (RQQEATREPRT) the composition is skewed to basic and acidic residues.

Belongs to the endothelin/sarafotoxin family.

The protein localises to the secreted. In terms of biological role, endothelins are endothelium-derived vasoconstrictor peptides. This chain is Endothelin-2 (EDN2), found in Oryctolagus cuniculus (Rabbit).